A 168-amino-acid polypeptide reads, in one-letter code: Transcriptional regulator MraZ (168 aa).

2 consecutive SpoVT-AbrB domains span residues 8 to 51 (EYNQ…GGDR) and 90 to 140 (ALNM…KADI).

It belongs to the MraZ family. Forms oligomers.

It localises to the cytoplasm. The protein resides in the nucleoid. In Cereibacter sphaeroides (strain KD131 / KCTC 12085) (Rhodobacter sphaeroides), this protein is Transcriptional regulator MraZ.